We begin with the raw amino-acid sequence, 269 residues long: Probable 3-deoxy-manno-octulosonic acid transferase (269 aa).

The protein localises to the cytoplasm. The catalysed reaction is an alpha-Kdo-(2-&gt;4)-alpha-Kdo-(2-&gt;6)-lipid IVA + CMP-3-deoxy-beta-D-manno-octulosonate = an alpha-Kdo-(2-&gt;4)-alpha-Kdo-(2-&gt;4)-alpha-Kdo-(2-&gt;6)-lipid IVA + CMP + H(+). It functions in the pathway bacterial outer membrane biogenesis; LPS core biosynthesis. Functionally, involved in the biosynthesis of the core oligosaccharide region of lipopolysaccharide (LPS). Required for the addition of 3-deoxy-D-manno-oct-2-ulosonic acid III (KdoIII) to the KdoII residue of the inner lipopolysaccharide core. The protein is Probable 3-deoxy-manno-octulosonic acid transferase of Salmonella typhimurium (strain LT2 / SGSC1412 / ATCC 700720).